The chain runs to 219 residues: ATP synthase subunit a (219 aa).

6 helical membrane-spanning segments follow: residues 16–36 (LSNW…FWLI), 57–79 (LLMG…FILF), 96–116 (LAVT…YTWI), 122–142 (ALAH…MVLM), 158–178 (LAAN…QGTL), and 184–204 (TSIV…VAII).

The protein belongs to the ATPase A chain family. F-type ATPases have 2 components, CF(1) - the catalytic core - and CF(0) - the membrane proton channel. CF(1) has five subunits: alpha(3), beta(3), gamma(1), delta(1), epsilon(1). CF(0) has three main subunits: a, b and c.

It is found in the mitochondrion inner membrane. Mitochondrial membrane ATP synthase (F(1)F(0) ATP synthase or Complex V) produces ATP from ADP in the presence of a proton gradient across the membrane which is generated by electron transport complexes of the respiratory chain. F-type ATPases consist of two structural domains, F(1) - containing the extramembraneous catalytic core and F(0) - containing the membrane proton channel, linked together by a central stalk and a peripheral stalk. During catalysis, ATP synthesis in the catalytic domain of F(1) is coupled via a rotary mechanism of the central stalk subunits to proton translocation. Key component of the proton channel; it may play a direct role in the translocation of protons across the membrane. This chain is ATP synthase subunit a (ATP6), found in Artemia franciscana (Brine shrimp).